A 325-amino-acid polypeptide reads, in one-letter code: Helicase VP6-A (325 aa).

Disordered regions lie at residues Met-1–Arg-127 and Glu-174–Arg-230. Composition is skewed to basic and acidic residues over residues Val-8–Gln-18, Glu-32–Glu-54, Gly-61–Ile-79, and Pro-92–Gly-105. Lys-106 is an ATP binding site. Positions Lys-106–Gly-122 are enriched in gly residues. The segment covering Gly-175–Ala-229 has biased composition (basic and acidic residues).

Belongs to the orbivirus VP6 family. As to quaternary structure, homohexamer.

The protein localises to the virion. It carries out the reaction ATP + H2O = ADP + phosphate + H(+). Its function is as follows. ATP dependent RNA helicase essential for RNA packaging and viral transcription. Possesses ss- and dsRNA-binding capacity. The sequence is that of Helicase VP6-A (Segment-9) from Bluetongue virus 13 (isolate USA) (BTV 13).